The sequence spans 351 residues: Biotin synthase (351 aa).

In terms of domain architecture, Radical SAM core spans 42–269 (NEVQVSTLLS…KSHVRLSAGR (228 aa)). The [4Fe-4S] cluster site is built by C57, C61, and C64. 4 residues coordinate [2Fe-2S] cluster: C101, C132, C192, and R264.

The protein belongs to the radical SAM superfamily. Biotin synthase family. In terms of assembly, homodimer. Requires [4Fe-4S] cluster as cofactor. [2Fe-2S] cluster serves as cofactor.

It catalyses the reaction (4R,5S)-dethiobiotin + (sulfur carrier)-SH + 2 reduced [2Fe-2S]-[ferredoxin] + 2 S-adenosyl-L-methionine = (sulfur carrier)-H + biotin + 2 5'-deoxyadenosine + 2 L-methionine + 2 oxidized [2Fe-2S]-[ferredoxin]. It functions in the pathway cofactor biosynthesis; biotin biosynthesis; biotin from 7,8-diaminononanoate: step 2/2. In terms of biological role, catalyzes the conversion of dethiobiotin (DTB) to biotin by the insertion of a sulfur atom into dethiobiotin via a radical-based mechanism. The chain is Biotin synthase from Psychromonas ingrahamii (strain DSM 17664 / CCUG 51855 / 37).